The chain runs to 423 residues: Endochitinase 42 (423 aa).

The N-terminal stretch at 1–22 is a signal peptide; it reads MLSFLGKSVALLAALQATLSSP. The propeptide occupies 23–34; it reads KPGHRRASVEKR. The region spanning 38–401 is the GH18 domain; the sequence is YANSVYFTNW…GTSHRALGGL (364 aa). Residues 102 to 103 and 129 to 132 each bind chitin; these read GT and GGWT. The Proton donor role is filled by glutamate 171. Position 172 (tyrosine 172) interacts with chitin. The N-linked (GlcNAc...) asparagine glycan is linked to asparagine 218. Chitin-binding positions include 237 to 240 and tryptophan 378; that span reads MAYD.

Belongs to the glycosyl hydrolase 18 family. Chitinase class V subfamily.

Its subcellular location is the secreted. The catalysed reaction is Random endo-hydrolysis of N-acetyl-beta-D-glucosaminide (1-&gt;4)-beta-linkages in chitin and chitodextrins.. Its function is as follows. Secreted chitinase involved in the degradation of chitin, a component of the cell walls of fungi and exoskeletal elements of some animals (including worms and arthropods). Plays a morphogenetic role during apical growth, cell division and differentiation (cell wall morphogenesis). Also acts as an antifungal agent. Involved in the degradation and further assimilation of phytopathogenic fungi, namely mycoparasitism, the major mechanism accounting for the antagonistic activity against phytopathogenic fungi displayed by Trichoderma. The polypeptide is Endochitinase 42 (chit42) (Trichoderma harzianum (Hypocrea lixii)).